Consider the following 314-residue polypeptide: UPF0761 membrane protein VP0125 (314 aa).

The next 6 membrane-spanning stretches (helical) occupy residues 41–61 (YLAY…LSIL), 104–124 (MSAV…SNID), 139–159 (LVFS…LVGA), 185–205 (FLRW…YILV), 217–237 (VGAA…ALYI), and 249–269 (ALAA…IVLL). Positions 295 to 314 (ESQLANEGSESSDSANSTSQ) are disordered.

Belongs to the UPF0761 family.

The protein localises to the cell inner membrane. In Vibrio parahaemolyticus serotype O3:K6 (strain RIMD 2210633), this protein is UPF0761 membrane protein VP0125.